The following is a 275-amino-acid chain: NADPH-dependent 7-cyano-7-deazaguanine reductase (275 aa).

Residue 81–83 (IES) coordinates substrate. Residue 83 to 84 (SK) coordinates NADPH. The Thioimide intermediate role is filled by C181. D188 acts as the Proton donor in catalysis. 220 to 221 (HE) contributes to the substrate binding site. 249–250 (RG) contacts NADPH.

Belongs to the GTP cyclohydrolase I family. QueF type 2 subfamily. As to quaternary structure, homodimer.

The protein resides in the cytoplasm. It catalyses the reaction 7-aminomethyl-7-carbaguanine + 2 NADP(+) = 7-cyano-7-deazaguanine + 2 NADPH + 3 H(+). It participates in tRNA modification; tRNA-queuosine biosynthesis. In terms of biological role, catalyzes the NADPH-dependent reduction of 7-cyano-7-deazaguanine (preQ0) to 7-aminomethyl-7-deazaguanine (preQ1). The protein is NADPH-dependent 7-cyano-7-deazaguanine reductase of Xylella fastidiosa (strain M12).